The primary structure comprises 624 residues: Outer dynein arm-docking complex subunit 4 (624 aa).

TPR repeat units lie at residues 11–44 (FPSY…QSGD), 46–78 (NCLV…DPTF), 79–112 (CKGI…RPDR), 273–309 (LKSL…NQEE), 318–351 (GNLY…AKEH), 358–391 (SRAL…AKTT), 395–428 (TWLF…AEEE), and 435–468 (LNAS…AKLV). The disordered stretch occupies residues 511 to 624 (MSQMDLQGAS…VQKLEKTKEE (114 aa)). 3 stretches are compositionally biased toward basic and acidic residues: residues 520–557 (SEKE…DRKS), 576–588 (IRRE…RRLS), and 595–624 (PSED…TKEE).

Component of the outer dynein arm-docking complex along with ODAD1, ODAD2, and ODAD3. Interacts with ODAD1; this interaction may facilitate the recruitment and/or attachment of outer dynein arm docking complex proteins, including ODAD1, ODAD3 and ODAD2, to ciliary axonemes. Interacts with components of the IFT complex A, including IFT140, TTC21B/IFT139 and WDR19/IFT144, and the IFT complex B, including IFT46, IFT52 and IFT57. Interacts with CFAP53.

It is found in the cell projection. The protein localises to the cilium. Its subcellular location is the cytoplasm. It localises to the cytoskeleton. The protein resides in the cilium axoneme. Functionally, component of the outer dynein arm-docking complex (ODA-DC) that mediates outer dynein arms (ODA) binding onto the doublet microtubule. Plays an essential role for the assembly of ODA-DC and for the docking of ODA in ciliary axoneme. This is Outer dynein arm-docking complex subunit 4 (Odad4) from Mus musculus (Mouse).